A 265-amino-acid polypeptide reads, in one-letter code: Homeobox protein CDX-1 (265 aa).

A disordered region spans residues 9 to 152; sequence KDSPVYPGPA…GGGGVSGKTR (144 aa). A compositionally biased stretch (pro residues) spans 30–43; sequence YGPPAPPPAPPQYP. Residues 73–92 show a composition bias toward low complexity; the sequence is AAAYGPGPAAPAASPASLAF. The span at 93–108 shows a compositional bias: pro residues; that stretch reads GPPPDFSPVPAPPGPG. Low complexity predominate over residues 110–126; the sequence is GLLAQPLGGPGTPSSPG. A DNA-binding region (homeobox) is located at residues 154-213; it reads KDKYRVVYTDHQRLELEKEFHYSRYITIRRKSELAANLGLTERQVKIWFQNRRAKERKVN. The tract at residues 157 to 178 is interaction with DNA; sequence YRVVYTDHQRLELEKEFHYSRY. The interaction with 5-mCpG DNA stretch occupies residues 196–207; sequence RQVKIWFQNRRA. Residues 206–217 are compositionally biased toward basic residues; sequence RAKERKVNKKKQ. The segment at 206 to 265 is disordered; it reads RAKERKVNKKKQQQQQPPQPPTAHDITATPARPSLGGLCPSNTSLLATSSPMPVKEEFLP. A compositionally biased stretch (polar residues) spans 245 to 256; sequence PSNTSLLATSSP.

Belongs to the Caudal homeobox family.

Its subcellular location is the nucleus. Functionally, plays a role in transcriptional regulation. Involved in activated KRAS-mediated transcriptional activation of PRKD1 in colorectal cancer (CRC) cells. Binds to the PRKD1 promoter in colorectal cancer (CRC) cells. Could play a role in the terminal differentiation of the intestine. Binds preferentially to methylated DNA. The protein is Homeobox protein CDX-1 (CDX1) of Pongo pygmaeus (Bornean orangutan).